Consider the following 705-residue polypeptide: Variediene synthase (705 aa).

Residues 9–331 (LNSTLSSVVE…RCPRYHPWLC (323 aa)) form a terpene cyclase region. A Mg(2+)-binding site is contributed by Asp100. Substrate is bound by residues Asp100, 186 to 189 (RIID), Asn230, 234 to 238 (SFDIE), and 325 to 326 (RY). Residues 100 to 104 (DNVVE) carry the DDXXD 1 motif. Positions 230–238 (NDYFSFDIE) match the NSE/DTE motif. The interval 332–705 (KEAASLLHQD…VRLLIHRLKV (374 aa)) is prenyltransferase. The segment covering 349–366 (GRKPQALEEYRSRSHSES) has biased composition (basic and acidic residues). Residues 349-374 (GRKPQALEEYRSRSHSESDLSDASPT) form a disordered region. Lys424, Arg427, and His456 together coordinate isopentenyl diphosphate. 2 residues coordinate Mg(2+): Asp463 and Asp467. The DDXXD 2 motif lies at 463-467 (DDIED). Arg472 contributes to the dimethylallyl diphosphate binding site. Arg473 contributes to the isopentenyl diphosphate binding site. Positions 550, 551, 589, 596, 605, and 615 each coordinate dimethylallyl diphosphate.

It in the N-terminal section; belongs to the terpene synthase family. This sequence in the C-terminal section; belongs to the FPP/GGPP synthase family. Hexamer. The cofactor is Mg(2+).

It catalyses the reaction isopentenyl diphosphate + (2E,6E)-farnesyl diphosphate = (2E,6E,10E)-geranylgeranyl diphosphate + diphosphate. The catalysed reaction is isopentenyl diphosphate + (2E,6E,10E)-geranylgeranyl diphosphate = (2E,6E,10E,14E)-geranylfarnesyl diphosphate + diphosphate. The enzyme catalyses (2E,6E,10E)-geranylgeranyl diphosphate = variediene + diphosphate. It carries out the reaction (2E,6E,10E,14E)-geranylfarnesyl diphosphate = (R,2E)-alpha-cericerene + diphosphate. Its pathway is secondary metabolite biosynthesis; terpenoid biosynthesis. Bifunctional terpene synthase that converts dimethylallyl diphosphate (DMAPP) and isopentenyl diphosphate (IPP) into variediene as a single product. The C-terminal prenyltransferase (PT) domain of EvVS catalyzes formation of geranylgeranyl pyrophosphate (GGPP), whereas the N-terminal terpene cyclase (TC) domain catalyzes the cyclization of GGPP to variediene. The PT domain can also synthesize geranylfarnesyl pyrophosphate (GFPP) from the C5 isoprene units in vitro, while the TC domain is able to cyclize GFPP to the sesterterpene (2E)-alpha-cericerene. The protein is Variediene synthase of Emericella variicolor (Aspergillus stellatus).